The chain runs to 418 residues: MNTLLAFIAIFSVLVFVHEWGHLYFAKKAGILCYEFAIGMGPKLFAFERNDTIYTIRLLPIGGYVRMAGEEPEQPTIRPGYEIGLVLDEKDTVKELIVNNKSKHPEAQVVQVERIDLVHDLFVETIDEDTGELVRYPIDEKAFIVQDEVAQIIAPWKRQFGSKPLPKRAMAIFAGPLMNFILGFVILLGLSLYQGVTLSSEIVINGENSPAEAAGLQDGDVITAVNGVEVDSWKEMTTEVKKYPGEEVSIDYERNGEALQTNATLSQVEVMPDEYEGFLGVSGVPEFSLLGSLQYAGNEFINMATSIFDTLGLIFTGQFSLDYISGPVGIYDITDQAVSLGIQTVIFFAALLSINLGVINLMPIPALDGGRLMFLAYEGIRGKPVSPEKEGAIQFIGFALVMLLMIVVTWNDISKLFS.

Transmembrane regions (helical) follow at residues 5-25 (LAFI…HLYF), 170-190 (MAIF…LLGL), 345-365 (VIFF…MPIP), and 390-410 (EGAI…VVTW). H18 is a Zn(2+) binding site. The active site involves E19. Position 22 (H22) interacts with Zn(2+). The region spanning 183–267 (GFVILLGLSL…ALQTNATLSQ (85 aa)) is the PDZ domain.

It belongs to the peptidase M50B family. Zn(2+) serves as cofactor.

It localises to the cell membrane. Its function is as follows. Is responsible for Site-2 cleavage of the RsiW anti-sigma factor. This results, after a third proteolytic step catalyzed by the ClpXP protease, in the release of SigW and the transcription activation of the genes under the control of the sigma-W factor. This Shouchella clausii (strain KSM-K16) (Alkalihalobacillus clausii) protein is Zinc metalloprotease RasP (rasP).